The sequence spans 408 residues: UPF0496 protein At5g66670 (408 aa).

A run of 2 helical transmembrane segments spans residues 239–259 and 262–282; these read VVFATAFVTVFVLSVVAAAMM and PVLSAVASGLTTPIEVVGMWC.

Belongs to the UPF0496 family.

The protein resides in the membrane. This is UPF0496 protein At5g66670 from Arabidopsis thaliana (Mouse-ear cress).